A 64-amino-acid polypeptide reads, in one-letter code: Large ribosomal subunit protein uL29 (64 aa).

This sequence belongs to the universal ribosomal protein uL29 family.

This is Large ribosomal subunit protein uL29 from Levilactobacillus brevis (strain ATCC 367 / BCRC 12310 / CIP 105137 / JCM 1170 / LMG 11437 / NCIMB 947 / NCTC 947) (Lactobacillus brevis).